Here is a 2621-residue protein sequence, read N- to C-terminus: Nonribosomal peptide synthetase dtpA (2621 aa).

Residues 446–844 form an adenylation 1 region; it reads CMEQPNAEAI…GRKDQQVKIR (399 aa). Residues 978-1054 enclose the Carrier 1 domain; sequence QPYTQVEETL…EVALYSRALS (77 aa). Ser-1015 carries the O-(pantetheine 4'-phosphoryl)serine modification. The interval 1095–1506 is condensation 1; sequence EDIYPCTALQ…LNQLELAGPQ (412 aa). The tract at residues 1534 to 1930 is adenylation 2; sequence SRTQPGASAI…GRRDNQVKLR (397 aa). Positions 2071 to 2147 constitute a Carrier 2 domain; sequence QPSTTQEALV…LFCTNASTSI (77 aa). Ser-2108 is subject to O-(pantetheine 4'-phosphoryl)serine. The interval 2220 to 2618 is condensation 2; the sequence is AIFKLHGSKV…HSARPIASID (399 aa).

Belongs to the NRP synthetase family.

It participates in alkaloid biosynthesis. Functionally, nonribosomal peptide synthetase; part of the gene cluster that mediates the biosynthesis of the dimeric diketopiperazine alkaloid ditryptophenaline. The nonribosomal peptide synthase dtpA accepts L-tryptophan and L-phenylalanine as its substrates and forms the phenylalanyl-tryptophanyl cyclic dipeptide product cyclophenylalanyltryptophenyl. The N-methyltransferase dtpB is responsible for the N-methylation of cyclophenylalanyltryptophenyl to yield cyclo-N-methylphenylalanyltryptophenyl. The cytochrome P450 monooxygenase is responsible not only for pyrroloindole ring formation but also for concurrent dimerization of N-methylphenylalanyltryptophanyl diketopiperazine monomers into a homodimeric product. This Aspergillus flavus (strain ATCC 200026 / FGSC A1120 / IAM 13836 / NRRL 3357 / JCM 12722 / SRRC 167) protein is Nonribosomal peptide synthetase dtpA.